A 172-amino-acid polypeptide reads, in one-letter code: DNA-directed RNA polymerase II subunit RPB7 (172 aa).

It belongs to the eukaryotic RPB7/RPC8 RNA polymerase subunit family. In terms of assembly, component of the RNA polymerase II (Pol II) complex consisting of 12 subunits. RPB4 and RPB7 form a subcomplex that protrudes from the 10-subunit Pol II core complex.

It is found in the nucleus. Its function is as follows. DNA-dependent RNA polymerase catalyzes the transcription of DNA into RNA using the four ribonucleoside triphosphates as substrates. Component of RNA polymerase II which synthesizes mRNA precursors and many functional non-coding RNAs. Pol II is the central component of the basal RNA polymerase II transcription machinery. It is composed of mobile elements that move relative to each other. RPB7 is part of a subcomplex with RPB4 that binds to a pocket formed by RPB1, RPB2 and RPB6 at the base of the clamp element. The RPB4-RPB7 subcomplex seems to lock the clamp via RPB7 in the closed conformation thus preventing double-stranded DNA to enter the active site cleft. The RPB4-RPB7 subcomplex binds single-stranded DNA and RNA. In Danio rerio (Zebrafish), this protein is DNA-directed RNA polymerase II subunit RPB7 (polr2g).